A 236-amino-acid polypeptide reads, in one-letter code: Lectin alpha chain (236 aa).

Mn(2+)-binding residues include E8 and D10. Ca(2+) contacts are provided by D10, Y12, N14, and D19. Residue Y12 participates in a carbohydrate binding. Positions 19, 24, and 34 each coordinate Mn(2+). A carbohydrate is bound at residue 99–100; the sequence is LY. Ca(2+) is bound at residue D207. Position 227 (R227) interacts with a carbohydrate.

Belongs to the leguminous lectin family. Equilibrium between homodimer and homotetramer. Oligomerization is pH-dependent with homotetramers forming at pH 6.5 and above. The beta and gamma chains are produced by partial proteolytic processing of the lectin alpha chain by an asparaginyl endopeptidase. Mixture of 60% alpha lectin and 40% of its beta and gamma proteolytic fragments. Seed.

Functionally, D-mannose/D-glucose-binding lectin. Has anti-inflammatory activity in rats. Induces histamine release in mast cells from rat. Induces lymphocyte proliferation and IFNG production. This chain is Lectin alpha chain, found in Cratylia argentea (Cratylia floribunda).